Consider the following 71-residue polypeptide: MAAAKGKKGAKAPSTKKSDYYKVEGNSVTRTKKACPKCGAGVFMAEHLNRYACGKCGFLEYKKNEKTEEQE.

Zn(2+) is bound by residues Cys-35, Cys-38, Cys-53, and Cys-56. Residues 35–56 form a C4-type zinc finger; sequence CPKCGAGVFMAEHLNRYACGKC.

It belongs to the eukaryotic ribosomal protein eS31 family. In terms of assembly, part of the 30S ribosomal subunit. The cofactor is Zn(2+).

In Methanococcus vannielii (strain ATCC 35089 / DSM 1224 / JCM 13029 / OCM 148 / SB), this protein is Small ribosomal subunit protein eS31.